The sequence spans 281 residues: Large ribosomal subunit protein uL2 (281 aa).

Positions 223 to 281 (VRGSVMNPVDHPHGGGEGKQPVGRKSPLTPWGKIALGVKTRKTKKSSNKLILRRRKDAK) are disordered. Residues 261–281 (KTRKTKKSSNKLILRRRKDAK) show a composition bias toward basic residues.

This sequence belongs to the universal ribosomal protein uL2 family. In terms of assembly, part of the 50S ribosomal subunit. Forms a bridge to the 30S subunit in the 70S ribosome.

One of the primary rRNA binding proteins. Required for association of the 30S and 50S subunits to form the 70S ribosome, for tRNA binding and peptide bond formation. It has been suggested to have peptidyltransferase activity; this is somewhat controversial. Makes several contacts with the 16S rRNA in the 70S ribosome. The protein is Large ribosomal subunit protein uL2 of Mycoplasmopsis synoviae (strain 53) (Mycoplasma synoviae).